The sequence spans 315 residues: ADP-L-glycero-D-manno-heptose-6-epimerase (315 aa).

Residues 10-11 (FI), 31-32 (DD), K38, K53, 76-80 (QGACS), and N93 each bind NADP(+). The active-site Proton acceptor is Y140. An NADP(+)-binding site is contributed by K144. N169 lines the substrate pocket. Residues V170 and K178 each contribute to the NADP(+) site. K178 functions as the Proton acceptor in the catalytic mechanism. Substrate contacts are provided by residues S180, H187, 201–204 (FEGC), R214, and Y278.

Belongs to the NAD(P)-dependent epimerase/dehydratase family. HldD subfamily. As to quaternary structure, homopentamer. NADP(+) is required as a cofactor.

The enzyme catalyses ADP-D-glycero-beta-D-manno-heptose = ADP-L-glycero-beta-D-manno-heptose. It participates in nucleotide-sugar biosynthesis; ADP-L-glycero-beta-D-manno-heptose biosynthesis; ADP-L-glycero-beta-D-manno-heptose from D-glycero-beta-D-manno-heptose 7-phosphate: step 4/4. Functionally, catalyzes the interconversion between ADP-D-glycero-beta-D-manno-heptose and ADP-L-glycero-beta-D-manno-heptose via an epimerization at carbon 6 of the heptose. This chain is ADP-L-glycero-D-manno-heptose-6-epimerase, found in Syntrophotalea carbinolica (strain DSM 2380 / NBRC 103641 / GraBd1) (Pelobacter carbinolicus).